Reading from the N-terminus, the 122-residue chain is Large ribosomal subunit protein uL14 (122 aa).

It belongs to the universal ribosomal protein uL14 family. Part of the 50S ribosomal subunit. Forms a cluster with proteins L3 and L19. In the 70S ribosome, L14 and L19 interact and together make contacts with the 16S rRNA in bridges B5 and B8.

Binds to 23S rRNA. Forms part of two intersubunit bridges in the 70S ribosome. The sequence is that of Large ribosomal subunit protein uL14 from Rhodopirellula baltica (strain DSM 10527 / NCIMB 13988 / SH1).